We begin with the raw amino-acid sequence, 340 residues long: Glycerol-3-phosphate dehydrogenase [NAD(P)+] (340 aa).

Positions 14, 15, 35, and 108 each coordinate NADPH. 2 residues coordinate sn-glycerol 3-phosphate: K108 and G136. A140 contributes to the NADPH binding site. The sn-glycerol 3-phosphate site is built by K191, D244, S254, R255, and N256. The active-site Proton acceptor is K191. R255 contacts NADPH. An NADPH-binding site is contributed by E281.

The protein belongs to the NAD-dependent glycerol-3-phosphate dehydrogenase family.

Its subcellular location is the cytoplasm. It catalyses the reaction sn-glycerol 3-phosphate + NAD(+) = dihydroxyacetone phosphate + NADH + H(+). It carries out the reaction sn-glycerol 3-phosphate + NADP(+) = dihydroxyacetone phosphate + NADPH + H(+). It functions in the pathway membrane lipid metabolism; glycerophospholipid metabolism. Functionally, catalyzes the reduction of the glycolytic intermediate dihydroxyacetone phosphate (DHAP) to sn-glycerol 3-phosphate (G3P), the key precursor for phospholipid synthesis. The protein is Glycerol-3-phosphate dehydrogenase [NAD(P)+] of Pseudomonas paraeruginosa (strain DSM 24068 / PA7) (Pseudomonas aeruginosa (strain PA7)).